Here is a 427-residue protein sequence, read N- to C-terminus: Serine--tRNA ligase (427 aa).

235 to 237 serves as a coordination point for L-serine; it reads TAE. ATP is bound by residues 266–268 and valine 282; that span reads RRE. Glutamate 289 is an L-serine binding site. Position 353–356 (353–356) interacts with ATP; the sequence is EASS. Serine 389 serves as a coordination point for L-serine.

The protein belongs to the class-II aminoacyl-tRNA synthetase family. Type-1 seryl-tRNA synthetase subfamily. In terms of assembly, homodimer. The tRNA molecule binds across the dimer.

It localises to the cytoplasm. The enzyme catalyses tRNA(Ser) + L-serine + ATP = L-seryl-tRNA(Ser) + AMP + diphosphate + H(+). The catalysed reaction is tRNA(Sec) + L-serine + ATP = L-seryl-tRNA(Sec) + AMP + diphosphate + H(+). The protein operates within aminoacyl-tRNA biosynthesis; selenocysteinyl-tRNA(Sec) biosynthesis; L-seryl-tRNA(Sec) from L-serine and tRNA(Sec): step 1/1. Its function is as follows. Catalyzes the attachment of serine to tRNA(Ser). Is also able to aminoacylate tRNA(Sec) with serine, to form the misacylated tRNA L-seryl-tRNA(Sec), which will be further converted into selenocysteinyl-tRNA(Sec). The protein is Serine--tRNA ligase of Chloroherpeton thalassium (strain ATCC 35110 / GB-78).